The chain runs to 279 residues: DegV domain-containing protein SACOL1460 (279 aa).

The 275-residue stretch at 4-278 (QIIVTDSTSD…QGAIGLVVLK (275 aa)) folds into the DegV domain. Hexadecanoate contacts are provided by Thr61 and Ser93.

Functionally, may bind long-chain fatty acids, such as palmitate, and may play a role in lipid transport or fatty acid metabolism. The sequence is that of DegV domain-containing protein SACOL1460 from Staphylococcus aureus (strain COL).